A 206-amino-acid polypeptide reads, in one-letter code: Octanoyltransferase (206 aa).

The BPL/LPL catalytic domain occupies 30 to 206 (PETNDEIWLV…EFVTLLNNSI (177 aa)). Substrate-binding positions include 69 to 76 (RGGQVTYH), 137 to 139 (SLG), and 150 to 152 (GIA). Residue C168 is the Acyl-thioester intermediate of the active site.

It belongs to the LipB family.

The protein localises to the cytoplasm. It catalyses the reaction octanoyl-[ACP] + L-lysyl-[protein] = N(6)-octanoyl-L-lysyl-[protein] + holo-[ACP] + H(+). It functions in the pathway protein modification; protein lipoylation via endogenous pathway; protein N(6)-(lipoyl)lysine from octanoyl-[acyl-carrier-protein]: step 1/2. In terms of biological role, catalyzes the transfer of endogenously produced octanoic acid from octanoyl-acyl-carrier-protein onto the lipoyl domains of lipoate-dependent enzymes. Lipoyl-ACP can also act as a substrate although octanoyl-ACP is likely to be the physiological substrate. The protein is Octanoyltransferase of Francisella tularensis subsp. mediasiatica (strain FSC147).